A 581-amino-acid polypeptide reads, in one-letter code: Colicin-E2 (581 aa).

Disordered regions lie at residues 1-74, 242-269, 293-320, 421-488, and 513-566; these read MSGG…SGGG, QTLSPGVTNNTDKDVRPAGFTQGGNTRD, PDQVKQRQDEENRRQQEWDATHPVEAAE, ADAA…IADK, and DLSK…MNNI. Over residues 20–35 the composition is skewed to gly residues; that stretch reads INGGPTGLGVGGGASD. Residues 36–45 are compositionally biased toward low complexity; the sequence is GSGWSSENNP. The span at 46–74 shows a compositional bias: gly residues; the sequence is WGGGSGSGIHWGGGSGHGNGGGNGNSGGG. Polar residues predominate over residues 242-251; sequence QTLSPGVTNN. Basic and acidic residues-rich tracts occupy residues 296-320, 429-452, and 464-475; these read VKQRQDEENRRQQEWDATHPVEAAE, QERRKQKENKEKDAKDKLDKESKR, and PVGDKWLDDAGK. Polar residues predominate over residues 518 to 527; it reads FKGSNKTNIQ. A compositionally biased stretch (basic and acidic residues) spans 535–554; it reads RKKDQVGGRERFELHHDKPI. Residues H549, H574, and H578 each contribute to the Zn(2+) site.

It belongs to the colicin/pyosin nuclease family.

This plasmid-coded bactericidal protein is an endonuclease active on both single- and double-stranded DNA but with undefined specificity. In terms of biological role, colicins are polypeptide toxins produced by and active against E.coli and closely related bacteria. The sequence is that of Colicin-E2 (col) from Escherichia coli.